Here is a 480-residue protein sequence, read N- to C-terminus: MNAVTKITPHTDYKIADISLADWGRKELDIAEHEMPGLMSIRRKHAQTKPLKDVRITGSLHMTIQTAVLIETLKDIGADVRWASCNIFSTQDHAAAAIAATGTPVFAWKGETLEEYWDCTLDALTFTLPDGTLTGPELVVDDGGDVTLLIHKGYELENGSTWVDEPASSHEEGVIKALLKRVAVERPGYWGRVVKDWKGVSEETTTGVHRLYQIAEAGKLLIPAINVNDSVTKSKFDNLYGCRESLADGLKRAMDVMLAGKVAVVCGYGDVGKGSAASLRAYGARVIVTEIDPICALQASMEGFEVNTIESTLGRADIYVTTTGNKDIITVEHLQAMKDQAIVCNIGHFDNEIQVDALKALKDVQKINIKPQVDKYVFPNGNAIFLLADGRLVNLGCATGHPSFVMSNSFANQTLAQIDLWEKRDTYEKKVYILPKHLDEEVARLHLEKIGVKLTTLTKDQADYLGVPVEGPFKPDHYRY.

Positions 63, 142, and 203 each coordinate substrate. Threonine 204–threonine 206 serves as a coordination point for NAD(+). 2 residues coordinate substrate: lysine 233 and aspartate 237. NAD(+)-binding positions include asparagine 238, glycine 267–glycine 272, glutamate 290, asparagine 325, isoleucine 346–histidine 348, and asparagine 394.

Belongs to the adenosylhomocysteinase family. The cofactor is NAD(+).

It is found in the cytoplasm. It catalyses the reaction S-adenosyl-L-homocysteine + H2O = L-homocysteine + adenosine. The protein operates within amino-acid biosynthesis; L-homocysteine biosynthesis; L-homocysteine from S-adenosyl-L-homocysteine: step 1/1. Functionally, may play a key role in the regulation of the intracellular concentration of adenosylhomocysteine. This is Adenosylhomocysteinase from Xanthomonas euvesicatoria pv. vesicatoria (strain 85-10) (Xanthomonas campestris pv. vesicatoria).